The chain runs to 523 residues: UDP-N-acetylmuramyl-tripeptide synthetase (523 aa).

Ser38 provides a ligand contact to UDP-N-acetyl-alpha-D-muramoyl-L-alanyl-D-glutamate. 116–122 (GTKGKTT) lines the ATP pocket. UDP-N-acetyl-alpha-D-muramoyl-L-alanyl-D-glutamate is bound by residues 162 to 163 (TT), Ser189, and Arg197. Lys231 is subject to N6-carboxylysine.

This sequence belongs to the MurCDEF family. MurE subfamily. Post-translationally, carboxylation is probably crucial for Mg(2+) binding and, consequently, for the gamma-phosphate positioning of ATP.

Its subcellular location is the cytoplasm. The protein operates within cell wall biogenesis; peptidoglycan biosynthesis. Catalyzes the addition of an amino acid to the nucleotide precursor UDP-N-acetylmuramoyl-L-alanyl-D-glutamate (UMAG) in the biosynthesis of bacterial cell-wall peptidoglycan. This Lactobacillus acidophilus (strain ATCC 700396 / NCK56 / N2 / NCFM) protein is UDP-N-acetylmuramyl-tripeptide synthetase.